Consider the following 306-residue polypeptide: Ribosomal RNA small subunit methyltransferase H (306 aa).

S-adenosyl-L-methionine contacts are provided by residues 33–35 (GGY), aspartate 51, phenylalanine 78, aspartate 96, and glutamine 103.

This sequence belongs to the methyltransferase superfamily. RsmH family.

Its subcellular location is the cytoplasm. It catalyses the reaction cytidine(1402) in 16S rRNA + S-adenosyl-L-methionine = N(4)-methylcytidine(1402) in 16S rRNA + S-adenosyl-L-homocysteine + H(+). Its function is as follows. Specifically methylates the N4 position of cytidine in position 1402 (C1402) of 16S rRNA. In Rickettsia felis (strain ATCC VR-1525 / URRWXCal2) (Rickettsia azadi), this protein is Ribosomal RNA small subunit methyltransferase H.